Here is a 436-residue protein sequence, read N- to C-terminus: GTPase Obg (436 aa).

In terms of domain architecture, Obg spans 2–160 (SMFLDTAKIK…RELQLELKIL (159 aa)). An OBG-type G domain is found at 161 to 338 (ADVGLVGFPS…LLDATAELLD (178 aa)). Residues 167–174 (GFPSVGKS), 192–196 (FTTIV), 214–217 (DLPG), 284–287 (NKMD), and 319–321 (SGL) each bind GTP. Residues serine 174 and threonine 194 each coordinate Mg(2+). The OCT domain occupies 358–436 (GFDEEEKAFE…IGKFEFEFVD (79 aa)).

This sequence belongs to the TRAFAC class OBG-HflX-like GTPase superfamily. OBG GTPase family. As to quaternary structure, monomer. Requires Mg(2+) as cofactor.

The protein resides in the cytoplasm. An essential GTPase which binds GTP, GDP and possibly (p)ppGpp with moderate affinity, with high nucleotide exchange rates and a fairly low GTP hydrolysis rate. Plays a role in control of the cell cycle, stress response, ribosome biogenesis and in those bacteria that undergo differentiation, in morphogenesis control. In Streptococcus pneumoniae serotype 2 (strain D39 / NCTC 7466), this protein is GTPase Obg.